The sequence spans 782 residues: Formin-like protein 9 (782 aa).

A signal peptide spans 1 to 24; the sequence is MQNFWFAIFFFLLTCAPPSPLSYA. A helical transmembrane segment spans residues 102–122; the sequence is LLLPALSAVLVIATVIGLALF. 3 disordered regions span residues 191–223, 264–287, and 387–407; these read DSPEIRPLPPLPPRSFHHNNYETEVNEEDEEEE, MSPPNPRYSDATNLQSPSPERLRV, and SSSQQSKVPALPPPTRPPPLV. The span at 214-223 shows a compositional bias: acidic residues; the sequence is EVNEEDEEEE. Positions 396–407 are enriched in pro residues; the sequence is ALPPPTRPPPLV. Residues 406–782 enclose the FH2 domain; sequence LVPPSQPFVV…LDQVCKEMGD (377 aa).

The protein belongs to the formin-like family. Class-I subfamily.

Its subcellular location is the membrane. In terms of biological role, might be involved in the organization and polarity of the actin cytoskeleton. This Arabidopsis thaliana (Mouse-ear cress) protein is Formin-like protein 9 (FH9).